A 919-amino-acid polypeptide reads, in one-letter code: TRPM8 channel-associated factor 2 (919 aa).

Residues 543–842 (DVWMSTGLYL…TYLQLQEVFG (300 aa)) form the Peptidase M60 domain.

It belongs to the TCAF family. In terms of assembly, interacts with TRPM8 (via N-terminus and C-terminus domains); the interaction inhibits TRPM8 channel activity. Interacts with TRPV6.

It is found in the cell membrane. In terms of biological role, negatively regulates the plasma membrane cation channel TRPM8 activity. Involved in the recruitment of TRPM8 to the cell surface. Promotes prostate cancer cell migration stimulation in a TRPM8-dependent manner. The chain is TRPM8 channel-associated factor 2 from Mus musculus (Mouse).